Reading from the N-terminus, the 314-residue chain is 4-hydroxy-3-methylbut-2-enyl diphosphate reductase (314 aa).

Cysteine 12 contributes to the [4Fe-4S] cluster binding site. (2E)-4-hydroxy-3-methylbut-2-enyl diphosphate is bound by residues histidine 41 and histidine 74. Residues histidine 41 and histidine 74 each contribute to the dimethylallyl diphosphate site. Isopentenyl diphosphate-binding residues include histidine 41 and histidine 74. Cysteine 96 is a binding site for [4Fe-4S] cluster. (2E)-4-hydroxy-3-methylbut-2-enyl diphosphate is bound at residue histidine 124. Dimethylallyl diphosphate is bound at residue histidine 124. Isopentenyl diphosphate is bound at residue histidine 124. The Proton donor role is filled by glutamate 126. Position 167 (threonine 167) interacts with (2E)-4-hydroxy-3-methylbut-2-enyl diphosphate. Residue cysteine 197 coordinates [4Fe-4S] cluster. Serine 225, serine 226, asparagine 227, and serine 269 together coordinate (2E)-4-hydroxy-3-methylbut-2-enyl diphosphate. 4 residues coordinate dimethylallyl diphosphate: serine 225, serine 226, asparagine 227, and serine 269. Isopentenyl diphosphate contacts are provided by serine 225, serine 226, asparagine 227, and serine 269.

Belongs to the IspH family. Requires [4Fe-4S] cluster as cofactor.

It carries out the reaction isopentenyl diphosphate + 2 oxidized [2Fe-2S]-[ferredoxin] + H2O = (2E)-4-hydroxy-3-methylbut-2-enyl diphosphate + 2 reduced [2Fe-2S]-[ferredoxin] + 2 H(+). It catalyses the reaction dimethylallyl diphosphate + 2 oxidized [2Fe-2S]-[ferredoxin] + H2O = (2E)-4-hydroxy-3-methylbut-2-enyl diphosphate + 2 reduced [2Fe-2S]-[ferredoxin] + 2 H(+). The protein operates within isoprenoid biosynthesis; dimethylallyl diphosphate biosynthesis; dimethylallyl diphosphate from (2E)-4-hydroxy-3-methylbutenyl diphosphate: step 1/1. It functions in the pathway isoprenoid biosynthesis; isopentenyl diphosphate biosynthesis via DXP pathway; isopentenyl diphosphate from 1-deoxy-D-xylulose 5-phosphate: step 6/6. Catalyzes the conversion of 1-hydroxy-2-methyl-2-(E)-butenyl 4-diphosphate (HMBPP) into a mixture of isopentenyl diphosphate (IPP) and dimethylallyl diphosphate (DMAPP). Acts in the terminal step of the DOXP/MEP pathway for isoprenoid precursor biosynthesis. In Actinobacillus pleuropneumoniae serotype 5b (strain L20), this protein is 4-hydroxy-3-methylbut-2-enyl diphosphate reductase.